The sequence spans 276 residues: Diaminopimelate epimerase (276 aa).

Positions 13, 46, and 66 each coordinate substrate. Cys-75 serves as the catalytic Proton donor. Residues Gly-76 to Asn-77, Asn-159, Asn-192, and Glu-210 to Arg-211 each bind substrate. The Proton acceptor role is filled by Cys-219. A substrate-binding site is contributed by Gly-220–Ser-221.

This sequence belongs to the diaminopimelate epimerase family. As to quaternary structure, homodimer.

It localises to the cytoplasm. It carries out the reaction (2S,6S)-2,6-diaminopimelate = meso-2,6-diaminopimelate. It participates in amino-acid biosynthesis; L-lysine biosynthesis via DAP pathway; DL-2,6-diaminopimelate from LL-2,6-diaminopimelate: step 1/1. Its function is as follows. Catalyzes the stereoinversion of LL-2,6-diaminopimelate (L,L-DAP) to meso-diaminopimelate (meso-DAP), a precursor of L-lysine and an essential component of the bacterial peptidoglycan. The protein is Diaminopimelate epimerase of Coxiella burnetii (strain CbuK_Q154) (Coxiella burnetii (strain Q154)).